A 179-amino-acid polypeptide reads, in one-letter code: Adenine phosphoribosyltransferase (179 aa).

The protein belongs to the purine/pyrimidine phosphoribosyltransferase family. Homodimer.

Its subcellular location is the cytoplasm. It catalyses the reaction AMP + diphosphate = 5-phospho-alpha-D-ribose 1-diphosphate + adenine. Its pathway is purine metabolism; AMP biosynthesis via salvage pathway; AMP from adenine: step 1/1. In terms of biological role, catalyzes a salvage reaction resulting in the formation of AMP, that is energically less costly than de novo synthesis. This Helicobacter pylori (strain J99 / ATCC 700824) (Campylobacter pylori J99) protein is Adenine phosphoribosyltransferase.